The chain runs to 382 residues: Putative acetyl-CoA C-acetyltransferase VraB (382 aa).

The active-site Acyl-thioester intermediate is the Cys-86. His-338 functions as the Proton acceptor in the catalytic mechanism.

This sequence belongs to the thiolase-like superfamily. Thiolase family.

The sequence is that of Putative acetyl-CoA C-acetyltransferase VraB (vraB) from Staphylococcus epidermidis (strain ATCC 12228 / FDA PCI 1200).